Here is a 312-residue protein sequence, read N- to C-terminus: Putative S-adenosyl-L-methionine-dependent methyltransferase Mjls_0078 (312 aa).

S-adenosyl-L-methionine-binding positions include Asp-134 and 163-164 (DL).

It belongs to the UPF0677 family.

Exhibits S-adenosyl-L-methionine-dependent methyltransferase activity. The protein is Putative S-adenosyl-L-methionine-dependent methyltransferase Mjls_0078 of Mycobacterium sp. (strain JLS).